Consider the following 68-residue polypeptide: Large ribosomal subunit protein uL29 (68 aa).

It belongs to the universal ribosomal protein uL29 family.

In Streptococcus agalactiae serotype Ia (strain ATCC 27591 / A909 / CDC SS700), this protein is Large ribosomal subunit protein uL29.